The following is a 223-amino-acid chain: Deoxyribose-phosphate aldolase 1 (223 aa).

Catalysis depends on aspartate 91, which acts as the Proton donor/acceptor. Catalysis depends on lysine 153, which acts as the Schiff-base intermediate with acetaldehyde. Lysine 182 (proton donor/acceptor) is an active-site residue.

This sequence belongs to the DeoC/FbaB aldolase family. DeoC type 1 subfamily.

The protein resides in the cytoplasm. It carries out the reaction 2-deoxy-D-ribose 5-phosphate = D-glyceraldehyde 3-phosphate + acetaldehyde. It participates in carbohydrate degradation; 2-deoxy-D-ribose 1-phosphate degradation; D-glyceraldehyde 3-phosphate and acetaldehyde from 2-deoxy-alpha-D-ribose 1-phosphate: step 2/2. Its function is as follows. Catalyzes a reversible aldol reaction between acetaldehyde and D-glyceraldehyde 3-phosphate to generate 2-deoxy-D-ribose 5-phosphate. The sequence is that of Deoxyribose-phosphate aldolase 1 from Yersinia pestis.